The sequence spans 279 residues: Tumor necrosis factor ligand superfamily member 6 (279 aa).

The Cytoplasmic portion of the chain corresponds to 1-78 (MQQPMNYPCP…PLKKKDHNTN (78 aa)). Residues 30–70 (FPCPSCGPRGPDQRRPPPPPPPVSPLPPPSQPLPLPPLTPL) form a disordered region. The span at 45 to 68 (PPPPPPPVSPLPPPSQPLPLPPLT) shows a compositional bias: pro residues. A helical; Signal-anchor for type II membrane protein transmembrane segment spans residues 79 to 100 (LWLPVVFFMVLVALVGMGLGMY). Over 101-279 (QLFHLQKELA…SKTFFGLYKL (179 aa)) the chain is Extracellular. The N-linked (GlcNAc...) asparagine glycan is linked to asparagine 117. The span at 126 to 135 (EKQIANPSTP) shows a compositional bias: polar residues. The tract at residues 126–150 (EKQIANPSTPSEKKEPRSVAHLTGN) is disordered. The THD domain maps to 143 to 279 (SVAHLTGNPH…SKTFFGLYKL (137 aa)). An N-linked (GlcNAc...) asparagine glycan is attached at asparagine 182. Residues cysteine 200 and cysteine 231 are joined by a disulfide bond. Residues asparagine 248 and asparagine 258 are each glycosylated (N-linked (GlcNAc...) asparagine).

The protein belongs to the tumor necrosis factor family. Homotrimer. Interacts with ARHGAP9, BAIAP2L1, BTK, CACNB3, CACNB4, CRK, DLG2, DNMBP, DOCK4, EPS8L3, FGR, FYB1, FYN, HCK, ITK, ITSN2, KALRN, LYN, MACC1, MIA, MPP4, MYO15A, NCF1, NCK1, NCK2, NCKIPSD, OSTF1, PIK3R1, PSTPIP1, RIMBP3C, SAMSN1, SH3GL3, SH3PXD2B, SH3PXD2A, SH3RF2, SKAP2, SNX33, SNX9, SORBS3, SPTA1, SRC, SRGAP1, SRGAP2, SRGAP3, TEC, TJP3 and YES1. The soluble form derives from the membrane form by proteolytic processing. The membrane-bound form undergoes two successive intramembrane proteolytic cleavages. The first one is processed by ADAM10 producing an N-terminal fragment, which lacks the receptor-binding extracellular domain. This ADAM10-processed FasL (FAsL APL) remnant form is still membrane anchored and further processed by SPPL2A that liberates the FasL intracellular domain (FasL ICD). FasL shedding by ADAM10 is a prerequisite for subsequent intramembrane cleavage by SPPL2A in T-cells. Post-translationally, phosphorylated by FGR on tyrosine residues; this is required for ubiquitination and subsequent internalization. In terms of processing, N-glycosylated. Glycosylation enhances apoptotic activity. Monoubiquitinated. Expressed in T-cells. Expressed in natural killer cells.

The protein localises to the cell membrane. It is found in the cytoplasmic vesicle lumen. The protein resides in the lysosome lumen. It localises to the secreted. Its subcellular location is the nucleus. Its function is as follows. Cytokine that binds to TNFRSF6/FAS, a receptor that transduces the apoptotic signal into cells. Involved in cytotoxic T-cell-mediated apoptosis, natural killer cell-mediated apoptosis and in T-cell development. Initiates fratricidal/suicidal activation-induced cell death (AICD) in antigen-activated T-cells contributing to the termination of immune responses. TNFRSF6/FAS-mediated apoptosis also has a role in the induction of peripheral tolerance. Binds to TNFRSF6B/DcR3, a decoy receptor that blocks apoptosis. Functionally, induces FAS-mediated activation of NF-kappa-B, initiating non-apoptotic signaling pathways. Can induce apoptosis but does not appear to be essential for this process. Cytoplasmic form induces gene transcription inhibition. This Mus musculus (Mouse) protein is Tumor necrosis factor ligand superfamily member 6 (Faslg).